Consider the following 80-residue polypeptide: Small ribosomal subunit protein bS18 (80 aa).

Belongs to the bacterial ribosomal protein bS18 family. Part of the 30S ribosomal subunit. Forms a tight heterodimer with protein bS6.

Functionally, binds as a heterodimer with protein bS6 to the central domain of the 16S rRNA, where it helps stabilize the platform of the 30S subunit. In Staphylococcus saprophyticus subsp. saprophyticus (strain ATCC 15305 / DSM 20229 / NCIMB 8711 / NCTC 7292 / S-41), this protein is Small ribosomal subunit protein bS18.